The following is an 87-amino-acid chain: Phosphocarrier protein HPr (87 aa).

One can recognise an HPr domain in the interval 2-87 (ASKDFHIVAE…NETMTKEGLA (86 aa)). The Pros-phosphohistidine intermediate role is filled by His15. A Phosphoserine; by HPrK/P modification is found at Ser46.

This sequence belongs to the HPr family.

It localises to the cytoplasm. With respect to regulation, phosphorylation on Ser-46 inhibits the phosphoryl transfer from enzyme I to HPr. In terms of biological role, general (non sugar-specific) component of the phosphoenolpyruvate-dependent sugar phosphotransferase system (sugar PTS). This major carbohydrate active-transport system catalyzes the phosphorylation of incoming sugar substrates concomitantly with their translocation across the cell membrane. The phosphoryl group from phosphoenolpyruvate (PEP) is transferred to the phosphoryl carrier protein HPr by enzyme I. Phospho-HPr then transfers it to the PTS EIIA domain. P-Ser-HPr interacts with the catabolite control protein A (CcpA), forming a complex that binds to DNA at the catabolite response elements cre, operator sites preceding a large number of catabolite-regulated genes. Thus, P-Ser-HPr is a corepressor in carbon catabolite repression (CCR), a mechanism that allows bacteria to coordinate and optimize the utilization of available carbon sources. P-Ser-HPr also plays a role in inducer exclusion, in which it probably interacts with several non-PTS permeases and inhibits their transport activity. The chain is Phosphocarrier protein HPr (ptsH) from Streptococcus mutans serotype c (strain ATCC 700610 / UA159).